The sequence spans 365 residues: Nudix hydrolase 24, chloroplastic (365 aa).

The transit peptide at 1–30 directs the protein to the chloroplast; sequence MASAFCSLCPTPTSLFSSHALIPTLQWRSS. In terms of domain architecture, Nudix hydrolase spans 196–337; that stretch reads GYAIHVNGYV…KDSCSLVIID (142 aa). The Nudix box motif lies at 235 to 256; sequence GGLPHGISVCENLVKECEEEAG. Mg(2+)-binding residues include Glu-250 and Glu-254.

The protein belongs to the Nudix hydrolase family. It depends on Mg(2+) as a cofactor. Requires Mn(2+) as cofactor. Expressed in leaves.

It is found in the plastid. It localises to the chloroplast. Its function is as follows. Probably mediates the hydrolysis of some nucleoside diphosphate derivatives. This is Nudix hydrolase 24, chloroplastic (NUDT24) from Arabidopsis thaliana (Mouse-ear cress).